The chain runs to 192 residues: Pyridoxal 5'-phosphate synthase subunit PdxT (192 aa).

Gly47–Ser49 lines the L-glutamine pocket. Cys79 (nucleophile) is an active-site residue. L-glutamine is bound by residues Arg106 and Ile134–Arg135. Residues His170 and Glu172 each act as charge relay system in the active site.

The protein belongs to the glutaminase PdxT/SNO family. As to quaternary structure, in the presence of PdxS, forms a dodecamer of heterodimers. Only shows activity in the heterodimer.

The enzyme catalyses aldehydo-D-ribose 5-phosphate + D-glyceraldehyde 3-phosphate + L-glutamine = pyridoxal 5'-phosphate + L-glutamate + phosphate + 3 H2O + H(+). The catalysed reaction is L-glutamine + H2O = L-glutamate + NH4(+). It participates in cofactor biosynthesis; pyridoxal 5'-phosphate biosynthesis. In terms of biological role, catalyzes the hydrolysis of glutamine to glutamate and ammonia as part of the biosynthesis of pyridoxal 5'-phosphate. The resulting ammonia molecule is channeled to the active site of PdxS. The sequence is that of Pyridoxal 5'-phosphate synthase subunit PdxT from Geobacillus sp. (strain WCH70).